The chain runs to 318 residues: Ribose-phosphate pyrophosphokinase (318 aa).

Residues 46–48 (DGE) and 105–106 (RQ) each bind ATP. Residues His139 and Asp178 each contribute to the Mg(2+) site. The active site involves Lys201. D-ribose 5-phosphate is bound by residues Arg203, Asp227, and 231–235 (DTAGT).

Belongs to the ribose-phosphate pyrophosphokinase family. Class I subfamily. Homohexamer. Mg(2+) is required as a cofactor.

It is found in the cytoplasm. It catalyses the reaction D-ribose 5-phosphate + ATP = 5-phospho-alpha-D-ribose 1-diphosphate + AMP + H(+). It functions in the pathway metabolic intermediate biosynthesis; 5-phospho-alpha-D-ribose 1-diphosphate biosynthesis; 5-phospho-alpha-D-ribose 1-diphosphate from D-ribose 5-phosphate (route I): step 1/1. Functionally, involved in the biosynthesis of the central metabolite phospho-alpha-D-ribosyl-1-pyrophosphate (PRPP) via the transfer of pyrophosphoryl group from ATP to 1-hydroxyl of ribose-5-phosphate (Rib-5-P). The protein is Ribose-phosphate pyrophosphokinase of Helicobacter pylori (strain J99 / ATCC 700824) (Campylobacter pylori J99).